The following is a 555-amino-acid chain: MYRTTCDAIAAILRQHTGKEDVMLTDGGDHADVASTIAFSLAKELRKAPAIIAQEIAGAISDQVMAETGAETRAVGPYVNFIFGAEYCMNVLEQAVREGYGKGQEKSERVVLEHTSANPNGPLHVGHIRNTIIGDTLARCFRKAGYPLEVQYYVNDMGRQIAIVAWGIATQGADIHAEGKGDHLIADVYIEANRHLEKEPALNAEIDRLMQLVESGDPDTISQFKIPVKRCLDGFKDTLAAMHVKHDRFIYESDFIRNGDTAKVLSRISHLPEARIEETLSLDLSAFGFEKNYILRRSDGTSVYAARDIAFHIWKGHNFDRVIDVLGADHKLIGTQLQATLEILGERVPEIVFFEFVSLPEGSMSTRKGKFISADELIAETERRAMEEVTARRSELSEEERKKIAHSVAISAIRYDIIRTIPEKSTVFDWKEALDFEKQSGPYIQYAHARACSILEKAESYTPCFEAEGEGEIALTKQIALFPKVITEVVTELKPHLLAIYARELADIFNSFYHAEPVLRAEGKIRDRRLTLVDATRNTLKEALETLGIDALRAM.

A 'HIGH' region motif is present at residues 117–127 (ANPNGPLHVGH).

Belongs to the class-I aminoacyl-tRNA synthetase family.

The protein resides in the cytoplasm. The catalysed reaction is tRNA(Arg) + L-arginine + ATP = L-arginyl-tRNA(Arg) + AMP + diphosphate. This is Arginine--tRNA ligase from Methanospirillum hungatei JF-1 (strain ATCC 27890 / DSM 864 / NBRC 100397 / JF-1).